The chain runs to 197 residues: Protein RmlC homolog (197 aa).

The active-site Proton acceptor is the histidine 76. The active-site Proton donor is tyrosine 140.

Its function is as follows. Could catalyze a 3,5-epimerization. This Streptococcus pyogenes serotype M6 (strain ATCC BAA-946 / MGAS10394) protein is Protein RmlC homolog (rfbC).